The sequence spans 318 residues: Homoserine kinase (318 aa).

Residue 97–107 coordinates ATP; it reads PIGSGLGSSAC.

Belongs to the GHMP kinase family. Homoserine kinase subfamily.

The protein localises to the cytoplasm. It carries out the reaction L-homoserine + ATP = O-phospho-L-homoserine + ADP + H(+). Its pathway is amino-acid biosynthesis; L-threonine biosynthesis; L-threonine from L-aspartate: step 4/5. Its function is as follows. Catalyzes the ATP-dependent phosphorylation of L-homoserine to L-homoserine phosphate. The polypeptide is Homoserine kinase (Vibrio cholerae serotype O1 (strain M66-2)).